A 365-amino-acid polypeptide reads, in one-letter code: Ribosomal RNA large subunit methyltransferase M (365 aa).

S-adenosyl-L-methionine is bound by residues Ser194, 227–230, Asp246, Asp266, and Asp284; that span reads CPGG. The Proton acceptor role is filled by Lys313.

Belongs to the class I-like SAM-binding methyltransferase superfamily. RNA methyltransferase RlmE family. RlmM subfamily. Monomer.

It is found in the cytoplasm. The enzyme catalyses cytidine(2498) in 23S rRNA + S-adenosyl-L-methionine = 2'-O-methylcytidine(2498) in 23S rRNA + S-adenosyl-L-homocysteine + H(+). Functionally, catalyzes the 2'-O-methylation at nucleotide C2498 in 23S rRNA. The protein is Ribosomal RNA large subunit methyltransferase M of Pasteurella multocida (strain Pm70).